The sequence spans 274 residues: MQNITQSWFVQGMIKATTDAWLKGWDERNGGNLTLRLDDADIALYHDNFHPQPRYIPLSQPMPLLANTPFIVTGSGKFFRNVQLDPAANLGVVKVDSDGAGYHILWGLTNEAVPTSELPAHFLSHCERIKATNGKDRVIMHCHATNLIALTYVLENDTAVFTRQLWEGSTECLVVFPDGVGILPWMVPGTDEIGQATAQEMQKHSLVLWPFHGVFGSGPTLDETFGLIDTAEKSAEVLVKVYSMGGMKQTISREELIALGQRFGVTPLASALAL.

The active site involves glutamate 117. Zn(2+) contacts are provided by histidine 141, histidine 143, and histidine 212.

This sequence belongs to the aldolase class II family. RhaD subfamily. In terms of assembly, homotetramer. Zn(2+) is required as a cofactor.

It localises to the cytoplasm. It carries out the reaction L-rhamnulose 1-phosphate = (S)-lactaldehyde + dihydroxyacetone phosphate. The protein operates within carbohydrate degradation; L-rhamnose degradation; glycerone phosphate from L-rhamnose: step 3/3. In terms of biological role, catalyzes the reversible cleavage of L-rhamnulose-1-phosphate to dihydroxyacetone phosphate (DHAP) and L-lactaldehyde. The chain is Rhamnulose-1-phosphate aldolase from Escherichia coli O157:H7.